The sequence spans 143 residues: MSLTAKDKSLITGFWQKISSKADDLGAEALSRMIVVFPATKVYFSHWPDLGPGSPSVKKHGKVIMAAVGDAVGKMNDLVGALSALSDLHAFKMRIDPGNFKTLSHNILVACAVNFPVDFTAEVHVAMDKFLAALGAALSDKYR.

S2 carries the post-translational modification N-acetylserine. Residues 2-143 enclose the Globin domain; the sequence is SLTAKDKSLI…LGAALSDKYR (142 aa). H60 is a binding site for O2. H89 contacts heme b.

Belongs to the globin family. In terms of assembly, heterotetramer of two alpha chains and two beta chains. Red blood cells.

Its function is as follows. Involved in oxygen transport from gills to the various peripheral tissues. The sequence is that of Hemoglobin cathodic subunit alpha from Anguilla anguilla (European freshwater eel).